Here is a 603-residue protein sequence, read N- to C-terminus: Serine/threonine-protein kinase PLK1 (603 aa).

The segment covering 1–15 (MNAAAKAGKLARAPA) has biased composition (low complexity). Residues 1–32 (MNAAAKAGKLARAPADLGKGGVPGDAAPGAPG) are disordered. Lys-19 is covalently cross-linked (Glycyl lysine isopeptide (Lys-Gly) (interchain with G-Cter in ubiquitin)). Positions 53 to 305 (YVRGRFLGKG…IHELLNDEFF (253 aa)) constitute a Protein kinase domain. ATP contacts are provided by residues 59 to 67 (LGKGGFAKC) and Lys-82. Ser-103 carries the phosphoserine modification. Residue Glu-131 coordinates ATP. Ser-137 is modified (phosphoserine). Asp-176 functions as the Proton acceptor in the catalytic mechanism. ATP is bound by residues 178–181 (KLGN) and Asp-194. The interval 194-221 (DFGLATKVEYEGERKKTLCGTPNYIAPE) is activation loop. A Phosphothreonine; by AURKA modification is found at Thr-210. Thr-214 is subject to Phosphothreonine. 2 positions are modified to phosphoserine; by autocatalysis: Ser-269 and Ser-335. Positions 337-340 (RKPL) match the D-box that targets the protein for proteasomal degradation in anaphase motif. Lys-338 participates in a covalent cross-link: Glycyl lysine isopeptide (Lys-Gly) (interchain with G-Cter in SUMO2). The interval 338–361 (KPLTVLNKGVENPLPDRPREKEEP) is disordered. Basic and acidic residues predominate over residues 351-361 (LPDRPREKEEP). Ser-375 and Ser-450 each carry phosphoserine. One can recognise a POLO box 1 domain in the interval 410–488 (WVSKWVDYSD…LNYFRNYMSE (79 aa)). Residue Lys-492 forms a Glycyl lysine isopeptide (Lys-Gly) (interchain with G-Cter in ubiquitin) linkage. Residues 493 to 507 (AGANITPREGDELAR) form a linker region. Thr-498 bears the Phosphothreonine mark. Residues 510–592 (YLRTWFRTRS…ARTMVDKLLS (83 aa)) form the POLO box 2 domain. The important for interaction with phosphorylated proteins stretch occupies residues 538–540 (HTK).

It belongs to the protein kinase superfamily. Ser/Thr protein kinase family. CDC5/Polo subfamily. In terms of assembly, interacts with CEP170 and EVI5. Interacts and phosphorylates ERCC6L. Interacts with FAM29A. Interacts with SLX4/BTBD12 and TTDN1. Interacts with BUB1B. Interacts (via POLO-box domain) with the phosphorylated form of BUB1, CENPU and CDC25C. Interacts with isoform 3 of SGO1. Interacts with BORA, KIF2A and AURKA. Interacts with TOPORS and CYLD. Interacts with ECT2; the interaction is stimulated upon phosphorylation of ECT2 on 'Thr-444'. Interacts with PRC1. Interacts with KIF20A/MKLP2 (when phosphorylated), leading to the recruitment at the central spindle. Interacts (via POLO box domains) with PPP1R12A/MYPT1 (when previously phosphorylated by CDK1). Part of an astrin (SPAG5)-kinastrin (SKAP) complex containing KNSTRN, SPAG5, PLK1, DYNLL1 and SGO2. Interacts with BIRC6/bruce. Interacts with CDK1-phosphorylated FRY; this interaction occurs in mitotic cells, but not in interphase cells. FRY interaction facilitates AURKA-mediated PLK1 phosphorylation. Interacts with CDK1-phosphorylated DCTN6 during mitotic prometaphase; the interaction facilitates recruitment to kinetochores. Interacts with CEP68; the interaction phosphorylates CEP68. Interacts (via POLO-box domain) with DCTN1. Interacts with CEP20 in later G1, S, G2 and M phases of the cell cycle; this interaction recruits PLK1 to centrosomes, a step required for S phase progression. Interacts with HSF1; this interaction increases upon heat shock but does not modulate neither HSF1 homotrimerization nor DNA-binding activities. Interacts with HNRNPU; this interaction induces phosphorylation of HNRNPU in mitosis. Interacts (via its N-terminus) with RIOK2. Interacts with KLHL22. Interacts (via POLO box domains) with NEDD9/HEF1 (via C-terminus). Interacts (via RVxF motif) with FIRRM; regulates PLK1 kinase activity. Interacts with SKA3; the interaction promotes the stability of PLK1. Interacts with the MTMR3:MTMR4 heterooligomer; brings CEP55 and PLK1 together during early mitosis, regulating the phosphorylation of CEP55 by PLK1 and its recruitment to the midbody where it can mediate cell abscission. Catalytic activity is enhanced by phosphorylation of Thr-210. Phosphorylation at Thr-210 is first detected on centrosomes in the G2 phase of the cell cycle, peaks in prometaphase and gradually disappears from centrosomes during anaphase. Dephosphorylation at Thr-210 at centrosomes is probably mediated by protein phosphatase 1C (PP1C), via interaction with PPP1R12A/MYPT1. Autophosphorylation and phosphorylation of Ser-137 may not be significant for the activation of PLK1 during mitosis, but may enhance catalytic activity during recovery after DNA damage checkpoint. Phosphorylated in vitro by STK10. Post-translationally, ubiquitinated by the anaphase promoting complex/cyclosome (APC/C) in anaphase and following DNA damage, leading to its degradation by the proteasome. Ubiquitination is mediated via its interaction with FZR1/CDH1. Ubiquitination and subsequent degradation prevents entry into mitosis and is essential to maintain an efficient G2 DNA damage checkpoint. Monoubiquitination at Lys-492 by the BCR(KLHL22) ubiquitin ligase complex does not lead to degradation: it promotes PLK1 dissociation from phosphoreceptor proteins and subsequent removal from kinetochores, allowing silencing of the spindle assembly checkpoint (SAC) and chromosome segregation.

Its subcellular location is the nucleus. It localises to the chromosome. The protein localises to the centromere. The protein resides in the kinetochore. It is found in the cytoplasm. Its subcellular location is the cytoskeleton. It localises to the microtubule organizing center. The protein localises to the centrosome. The protein resides in the spindle. It is found in the midbody. It carries out the reaction L-seryl-[protein] + ATP = O-phospho-L-seryl-[protein] + ADP + H(+). It catalyses the reaction L-threonyl-[protein] + ATP = O-phospho-L-threonyl-[protein] + ADP + H(+). With respect to regulation, activated by phosphorylation of Thr-210 by AURKA; phosphorylation by AURKA is enhanced by BORA. Once activated, activity is stimulated by binding target proteins. Binding of target proteins has no effect on the non-activated kinase. Several inhibitors targeting PLKs are currently in development and are under investigation in a growing number of clinical trials, such as BI 2536, an ATP-competitive PLK1 inhibitor or BI 6727, a dihydropteridinone that specifically inhibits the catalytic activity of PLK1. Its function is as follows. Serine/threonine-protein kinase that performs several important functions throughout M phase of the cell cycle, including the regulation of centrosome maturation and spindle assembly, the removal of cohesins from chromosome arms, the inactivation of anaphase-promoting complex/cyclosome (APC/C) inhibitors, and the regulation of mitotic exit and cytokinesis. Polo-like kinase proteins act by binding and phosphorylating proteins that are already phosphorylated on a specific motif recognized by the POLO box domains. Phosphorylates BORA, BUB1B/BUBR1, CCNB1, CDC25C, CEP55, ECT2, ERCC6L, FBXO5/EMI1, FOXM1, KIF20A/MKLP2, CENPU, NEDD1, NINL, NPM1, NUDC, PKMYT1/MYT1, KIZ, PPP1R12A/MYPT1, PRC1, RACGAP1/CYK4, RHNO1, SGO1, STAG2/SA2, TEX14, TOPORS, p73/TP73, TPT1, WEE1 and HNRNPU. Plays a key role in centrosome functions and the assembly of bipolar spindles by phosphorylating KIZ, NEDD1 and NINL. NEDD1 phosphorylation promotes subsequent targeting of the gamma-tubulin ring complex (gTuRC) to the centrosome, an important step for spindle formation. Phosphorylation of NINL component of the centrosome leads to NINL dissociation from other centrosomal proteins. Involved in mitosis exit and cytokinesis by phosphorylating CEP55, ECT2, KIF20A/MKLP2, CENPU, PRC1 and RACGAP1. Recruited at the central spindle by phosphorylating and docking PRC1 and KIF20A/MKLP2; creates its own docking sites on PRC1 and KIF20A/MKLP2 by mediating phosphorylation of sites subsequently recognized by the POLO box domains. Phosphorylates RACGAP1, thereby creating a docking site for the Rho GTP exchange factor ECT2 that is essential for the cleavage furrow formation. Promotes the central spindle recruitment of ECT2. Plays a central role in G2/M transition of mitotic cell cycle by phosphorylating CCNB1, CDC25C, FOXM1, CENPU, PKMYT1/MYT1, PPP1R12A/MYPT1 and WEE1. Part of a regulatory circuit that promotes the activation of CDK1 by phosphorylating the positive regulator CDC25C and inhibiting the negative regulators WEE1 and PKMYT1/MYT1. Also acts by mediating phosphorylation of cyclin-B1 (CCNB1) on centrosomes in prophase. Phosphorylates FOXM1, a key mitotic transcription regulator, leading to enhance FOXM1 transcriptional activity. Involved in kinetochore functions and sister chromatid cohesion by phosphorylating BUB1B/BUBR1, FBXO5/EMI1 and STAG2/SA2. PLK1 is high on non-attached kinetochores suggesting a role of PLK1 in kinetochore attachment or in spindle assembly checkpoint (SAC) regulation. Required for kinetochore localization of BUB1B. Regulates the dissociation of cohesin from chromosomes by phosphorylating cohesin subunits such as STAG2/SA2. Phosphorylates SGO1: required for spindle pole localization of isoform 3 of SGO1 and plays a role in regulating its centriole cohesion function. Mediates phosphorylation of FBXO5/EMI1, a negative regulator of the APC/C complex during prophase, leading to FBXO5/EMI1 ubiquitination and degradation by the proteasome. Acts as a negative regulator of p53 family members: phosphorylates TOPORS, leading to inhibit the sumoylation of p53/TP53 and simultaneously enhance the ubiquitination and subsequent degradation of p53/TP53. Phosphorylates the transactivation domain of the transcription factor p73/TP73, leading to inhibit p73/TP73-mediated transcriptional activation and pro-apoptotic functions. Phosphorylates BORA, and thereby promotes the degradation of BORA. Contributes to the regulation of AURKA function. Also required for recovery after DNA damage checkpoint and entry into mitosis. Phosphorylates MISP, leading to stabilization of cortical and astral microtubule attachments required for proper spindle positioning. Together with MEIKIN, acts as a regulator of kinetochore function during meiosis I: required both for mono-orientation of kinetochores on sister chromosomes and protection of centromeric cohesin from separase-mediated cleavage. Phosphorylates CEP68 and is required for its degradation. Regulates nuclear envelope breakdown during prophase by phosphorylating DCTN1 resulting in its localization in the nuclear envelope. Phosphorylates the heat shock transcription factor HSF1, promoting HSF1 nuclear translocation upon heat shock. Phosphorylates HSF1 also in the early mitotic period; this phosphorylation regulates HSF1 localization to the spindle pole, the recruitment of the SCF(BTRC) ubiquitin ligase complex induicing HSF1 degradation, and hence mitotic progression. Regulates mitotic progression by phosphorylating RIOK2. Through the phosphorylation of DZIP1 regulates the localization during mitosis of the BBSome, a ciliary protein complex involved in cilium biogenesis. Regulates DNA repair during mitosis by mediating phosphorylation of POLQ and RHNO1, thereby promoting POLQ recruitment to DNA damage sites. Phosphorylates ATXN10 which may play a role in the regulation of cytokinesis and may stimulate the proteasome-mediated degradation of ATXN10. The chain is Serine/threonine-protein kinase PLK1 (Plk1) from Rattus norvegicus (Rat).